A 401-amino-acid polypeptide reads, in one-letter code: Nicotinate phosphoribosyltransferase (401 aa).

A Phosphohistidine; by autocatalysis modification is found at His-221.

The protein belongs to the NAPRTase family. Transiently phosphorylated on a His residue during the reaction cycle. Phosphorylation strongly increases the affinity for substrates and increases the rate of nicotinate D-ribonucleotide production. Dephosphorylation regenerates the low-affinity form of the enzyme, leading to product release.

The enzyme catalyses nicotinate + 5-phospho-alpha-D-ribose 1-diphosphate + ATP + H2O = nicotinate beta-D-ribonucleotide + ADP + phosphate + diphosphate. The protein operates within cofactor biosynthesis; NAD(+) biosynthesis; nicotinate D-ribonucleotide from nicotinate: step 1/1. In terms of biological role, catalyzes the synthesis of beta-nicotinate D-ribonucleotide from nicotinate and 5-phospho-D-ribose 1-phosphate at the expense of ATP. This Erwinia tasmaniensis (strain DSM 17950 / CFBP 7177 / CIP 109463 / NCPPB 4357 / Et1/99) protein is Nicotinate phosphoribosyltransferase.